Here is a 181-residue protein sequence, read N- to C-terminus: Acireductone dioxygenase (181 aa).

Fe(2+) contacts are provided by H100, H102, E106, and H145. Residues H100, H102, E106, and H145 each contribute to the Ni(2+) site.

This sequence belongs to the acireductone dioxygenase (ARD) family. As to quaternary structure, monomer. Requires Fe(2+) as cofactor. Ni(2+) serves as cofactor.

It carries out the reaction 1,2-dihydroxy-5-(methylsulfanyl)pent-1-en-3-one + O2 = 3-(methylsulfanyl)propanoate + CO + formate + 2 H(+). The enzyme catalyses 1,2-dihydroxy-5-(methylsulfanyl)pent-1-en-3-one + O2 = 4-methylsulfanyl-2-oxobutanoate + formate + 2 H(+). It functions in the pathway amino-acid biosynthesis; L-methionine biosynthesis via salvage pathway; L-methionine from S-methyl-5-thio-alpha-D-ribose 1-phosphate: step 5/6. In terms of biological role, catalyzes 2 different reactions between oxygen and the acireductone 1,2-dihydroxy-3-keto-5-methylthiopentene (DHK-MTPene) depending upon the metal bound in the active site. Fe-containing acireductone dioxygenase (Fe-ARD) produces formate and 2-keto-4-methylthiobutyrate (KMTB), the alpha-ketoacid precursor of methionine in the methionine recycle pathway. Ni-containing acireductone dioxygenase (Ni-ARD) produces methylthiopropionate, carbon monoxide and formate, and does not lie on the methionine recycle pathway. This is Acireductone dioxygenase from Trichodesmium erythraeum (strain IMS101).